A 3014-amino-acid polypeptide reads, in one-letter code: Cadherin EGF LAG seven-pass G-type receptor 1 (3014 aa).

The N-terminal stretch at 1 to 20 is a signal peptide; it reads MAPPPPPVLPVLLLLAAAAA. At 22–2469 the chain is on the extracellular side; sequence PAMGLRAAAW…RENGEVLPLK (2448 aa). A disordered region spans residues 205–242; that stretch reads AGTPSASPSPSPPLPPNLPEARAGPARRARRGTSGRGS. The segment covering 211 to 222 has biased composition (pro residues); sequence SPSPSPPLPPNL. Cadherin domains are found at residues 246–353, 354–459, 460–565, 566–687, 688–789, 790–892, 893–999, 1000–1101, and 1106–1224; these read PMPN…SPVF, EQSE…YPQF, SEQN…EPIF, VSSP…DPVF, TQPT…RPVF, QSSH…APQF, LWDF…APMF, EKDE…PPVL, and ILFN…SPLL. N403, N546, N634, and N778 each carry an N-linked (GlcNAc...) asparagine glycan. N-linked (GlcNAc...) asparagine glycans are attached at residues N1114, N1139, N1213, N1249, N1259, and N1287. The EGF-like 1; calcium-binding domain maps to 1303–1361; it reads DDNICLREPCENYMKCVSVLRFDSSAPFLSSTTVLFRPIHPINGLRCRCPPGFTGDYCE. 9 disulfides stabilise this stretch: C1307-C1318, C1312-C1349, C1351-C1360, C1367-C1378, C1372-C1387, C1389-C1398, C1407-C1418, C1412-C1428, and C1430-C1440. The EGF-like 2; calcium-binding domain occupies 1363-1399; the sequence is EIDLCYSDPCGANGRCRSREGGYTCECFEDFTGEHCE. In terms of domain architecture, EGF-like 3; calcium-binding spans 1403-1441; the sequence is RSGRCANGVCKNGGTCVNLLIGGFHCVCPPGEYERPYCE. The Laminin G-like 1 domain maps to 1442-1646; the sequence is VTTRSFPPQS…IANNGTREGC (205 aa). N1576, N1623, and N1640 each carry an N-linked (GlcNAc...) asparagine glycan. Disulfide bonds link C1620-C1646, C1653-C1664, C1658-C1673, C1675-C1684, C1840-C1870, C1876-C1887, C1881-C1896, C1898-C1907, C1911-C1922, C1916-C1934, C1936-C1945, C1953-C1966, and C1968-C1978. The 37-residue stretch at 1649-1685 folds into the EGF-like 4; calcium-binding domain; it reads RRNFCDGRRCQNGGTCVNRWNMYLCECPLRFGGKNCE. At N1666 the chain carries (3R)-3-hydroxyasparagine. Residues 1689 to 1870 form the Laminin G-like 2 domain; the sequence is PHPQLFSGES…ALKVRVKDGC (182 aa). An EGF-like 5; calcium-binding domain is found at 1872-1907; that stretch reads VDDPCTSSPCPPNSRCHDAWEDYSCVCDKGYLGINC. D1889 carries the (3R)-3-hydroxyaspartate modification. The 39-residue stretch at 1908–1946 folds into the EGF-like 6; calcium-binding domain; sequence VDACHLNPCENMGACVRSPGSPQGYVCECGPSHYGPYCE. The region spanning 1947 to 1979 is the EGF-like 7; calcium-binding domain; that stretch reads NKLDLPCPRGWWGNPVCGPCHCAVSKGFDPDCN. N-linked (GlcNAc...) asparagine glycosylation occurs at N1979. The region spanning 1981-2016 is the EGF-like 8; calcium-binding domain; that stretch reads TNGQCQCKENYYKLLAQDTCLPCDCFPHGSHSRTCD. 5 cysteine pairs are disulfide-bonded: C1985–C2000, C1987–C2003, C2005–C2015, C2024–C2033, and C2036–C2048. Positions 2003–2050 constitute a Laminin EGF-like domain; that stretch reads CDCFPHGSHSRTCDMATGQCACKPGVIGRQCNRCDNPFAEVTTLGCEV. N-linked (GlcNAc...) asparagine glycosylation is found at N2103, N2122, and N2257. The interval 2291–2328 is disordered; that stretch reads PEEKEGPLLRPAGRRTTPQTTRPGPGTEREAPISRRRR. Positions 2297–2461 constitute a GAIN-B domain; sequence PLLRPAGRRT…AVLMDISRRE (165 aa). Residues 2300–2316 are compositionally biased toward low complexity; sequence RPAGRRTTPQTTRPGPG. Intrachain disulfides connect C2411-C2443 and C2431-C2445. The interval 2411–2461 is GPS; sequence CVFWNHSLAVGGTGGWSARGCELLSRNRTHVACQCSHTASFAVLMDISRRE. N2415 and N2437 each carry an N-linked (GlcNAc...) asparagine glycan. A helical transmembrane segment spans residues 2470 to 2490; the sequence is IVTYAAVSLSLAALLVAFVLL. Topologically, residues 2491–2501 are cytoplasmic; the sequence is SLVRMLRSNLH. Residues 2502 to 2522 form a helical membrane-spanning segment; it reads SIHKHLAVALFLSQLVFVIGI. N-linked (GlcNAc...) asparagine glycosylation occurs at N2523. The Extracellular portion of the chain corresponds to 2523 to 2527; the sequence is NQTEN. A helical membrane pass occupies residues 2528–2548; it reads PFLCTVVAILLHYIYMSTFAW. Residues 2549-2572 lie on the Cytoplasmic side of the membrane; the sequence is TLVESLHVYRMLTEVRNIDTGPMR. Residues 2573–2593 form a helical membrane-spanning segment; it reads FYYVVGWGIPAIVTGLAVGLD. The Extracellular segment spans residues 2594-2611; it reads PQGYGNPDFCWLSLQDTL. The chain crosses the membrane as a helical span at residues 2612–2632; sequence IWSFAGPIGAVIIINTVTSVL. The Cytoplasmic segment spans residues 2633-2655; sequence SAKVSCQRKHHYYGKKGIVSLLR. Residues 2656-2676 form a helical membrane-spanning segment; it reads TAFLLLLLISATWLLGLLAVN. Topologically, residues 2677 to 2683 are extracellular; the sequence is RDALSFH. The chain crosses the membrane as a helical span at residues 2684–2704; that stretch reads YLFAIFSGLQGPFVLLFHCVL. The Cytoplasmic segment spans residues 2705–3014; the sequence is NQEVRKHLKG…QADGSDSEKP (310 aa). 2 positions are modified to phosphoserine: S2761 and S2764. Disordered regions lie at residues 2777–2939 and 2954–3014; these read SSGL…PPPL and LADC…SEKP. Basic and acidic residues predominate over residues 2796-2806; the sequence is SCKDPPGHDSD. The span at 2814–2825 shows a compositional bias: low complexity; the sequence is DEQSSSYASSHS. Phosphoserine is present on residues S2871 and S2873. Positions 2876–2904 are enriched in basic and acidic residues; sequence PSGKPRLKVETKVSVELHREEQGSHRGEY. Low complexity predominate over residues 2960–2969; sequence SPTSSRTSSL. Residues 2983–2992 show a composition bias toward basic and acidic residues; the sequence is PGREPGRDHL.

This sequence belongs to the G-protein coupled receptor 2 family. LN-TM7 subfamily. The iron and 2-oxoglutarate dependent 3-hydroxylation of aspartate and asparagine is (R) stereospecific within EGF domains.

It is found in the cell membrane. Its function is as follows. Receptor that may have an important role in cell/cell signaling during nervous system formation. In Homo sapiens (Human), this protein is Cadherin EGF LAG seven-pass G-type receptor 1 (CELSR1).